The sequence spans 274 residues: 2-dehydro-3-deoxyphosphooctonate aldolase (274 aa).

This sequence belongs to the KdsA family.

The protein resides in the cytoplasm. It catalyses the reaction D-arabinose 5-phosphate + phosphoenolpyruvate + H2O = 3-deoxy-alpha-D-manno-2-octulosonate-8-phosphate + phosphate. The protein operates within carbohydrate biosynthesis; 3-deoxy-D-manno-octulosonate biosynthesis; 3-deoxy-D-manno-octulosonate from D-ribulose 5-phosphate: step 2/3. It participates in bacterial outer membrane biogenesis; lipopolysaccharide biosynthesis. The chain is 2-dehydro-3-deoxyphosphooctonate aldolase from Rickettsia peacockii (strain Rustic).